The following is a 426-amino-acid chain: MKLQKPKGTQDILPGDAAKWQYVESVARDTFSQYNYGEIRTPMFEHYEVISRSVGDTTDIVTKEMYDFYDKGDRHITLRPEGTAPVVRSYVENKLFAPEVQKPVKLYYIGSMFRYERPQAGRLREFHQIGVECFGAANPATDVETIAMAYHLFEKLGIKDVTLHLNSLGSPESRAAYRQALIDYLTPMRDQLSKDSQRRLDENPLRVLDSKEKEDKLAVEKAPSILDYLDEESQAHFEAVKDMLEALNIPYVIDTNMVRGLDYYNHTIFEFITSVEGSDLTICAGGRYDSLVGYFGGPETPGFGFGLGLERLLMVIEKQGITLPIETEMDVYLAVLGDGANSKALELVQAIRRQGFTAERDYLGRKIKAQFKSADTFKAKLVMTLGESEVEAGKAVIKNNRSRQEVEVSFEDMMTNFANISEQLLS.

The protein belongs to the class-II aminoacyl-tRNA synthetase family. Homodimer.

It is found in the cytoplasm. It catalyses the reaction tRNA(His) + L-histidine + ATP = L-histidyl-tRNA(His) + AMP + diphosphate + H(+). The polypeptide is Histidine--tRNA ligase (Streptococcus pyogenes serotype M18 (strain MGAS8232)).